The chain runs to 214 residues: Glycerol-3-phosphate acyltransferase (214 aa).

Transmembrane regions (helical) follow at residues 8-28 (LILAYLLGSIPTGLWIGQIFF), 70-90 (LLPLFLHINGISPMIFGLIAV), 111-131 (AGVVLGFSPLFFSYLIIIFIV), 144-164 (IVVAGFAIISVLIFPLLGIIL), and 165-185 (PSYDLLFTLIIILLASIILIR).

Belongs to the PlsY family. In terms of assembly, probably interacts with PlsX.

It is found in the cell membrane. The enzyme catalyses an acyl phosphate + sn-glycerol 3-phosphate = a 1-acyl-sn-glycero-3-phosphate + phosphate. It participates in lipid metabolism; phospholipid metabolism. Catalyzes the transfer of an acyl group from acyl-phosphate (acyl-PO(4)) to glycerol-3-phosphate (G3P) to form lysophosphatidic acid (LPA). This enzyme utilizes acyl-phosphate as fatty acyl donor, but not acyl-CoA or acyl-ACP. In Streptococcus gordonii (strain Challis / ATCC 35105 / BCRC 15272 / CH1 / DL1 / V288), this protein is Glycerol-3-phosphate acyltransferase.